The sequence spans 25 residues: Neuromedin-U-25 (25 aa).

N25 bears the Asparagine amide mark.

Belongs to the NmU family.

It localises to the secreted. Functionally, stimulates uterine smooth muscle contraction and causes selective vasoconstriction. This chain is Neuromedin-U-25 (NMU), found in Gallus gallus (Chicken).